The sequence spans 669 residues: DNA ligase (669 aa).

Residues 34-38 (DAEYD), 83-84 (SL), and Glu-114 each bind NAD(+). Lys-116 (N6-AMP-lysine intermediate) is an active-site residue. NAD(+) contacts are provided by Arg-137, Glu-171, Lys-287, and Lys-311. Residues Cys-405, Cys-408, Cys-423, and Cys-428 each contribute to the Zn(2+) site. Residues 591–669 (NIASYFAGKT…EERFLQELNK (79 aa)) form the BRCT domain.

It belongs to the NAD-dependent DNA ligase family. LigA subfamily. The cofactor is Mg(2+). Mn(2+) is required as a cofactor.

It carries out the reaction NAD(+) + (deoxyribonucleotide)n-3'-hydroxyl + 5'-phospho-(deoxyribonucleotide)m = (deoxyribonucleotide)n+m + AMP + beta-nicotinamide D-nucleotide.. DNA ligase that catalyzes the formation of phosphodiester linkages between 5'-phosphoryl and 3'-hydroxyl groups in double-stranded DNA using NAD as a coenzyme and as the energy source for the reaction. It is essential for DNA replication and repair of damaged DNA. This Bacillus cytotoxicus (strain DSM 22905 / CIP 110041 / 391-98 / NVH 391-98) protein is DNA ligase.